A 259-amino-acid chain; its full sequence is Putative protein phosphatase (259 aa).

The PPM-type phosphatase domain occupies 8 to 255; that stretch reads LFASLSKKGP…DNITLNLINL (248 aa).

It carries out the reaction O-phospho-L-seryl-[protein] + H2O = L-seryl-[protein] + phosphate. The catalysed reaction is O-phospho-L-threonyl-[protein] + H2O = L-threonyl-[protein] + phosphate. In Mycoplasma pneumoniae (strain ATCC 29342 / M129 / Subtype 1) (Mycoplasmoides pneumoniae), this protein is Putative protein phosphatase.